Consider the following 119-residue polypeptide: Basic phospholipase A2 DE-1 (119 aa).

Intrachain disulfides connect Cys-11-Cys-71, Cys-26-Cys-118, Cys-28-Cys-44, Cys-43-Cys-99, Cys-50-Cys-92, Cys-60-Cys-85, and Cys-78-Cys-90. Ca(2+)-binding residues include Tyr-27, Gly-29, Gly-31, and Asp-48. The active site involves Asp-93.

This sequence belongs to the phospholipase A2 family. Group I subfamily. D49 sub-subfamily. The cofactor is Ca(2+). Expressed by the venom gland.

Its subcellular location is the secreted. The catalysed reaction is a 1,2-diacyl-sn-glycero-3-phosphocholine + H2O = a 1-acyl-sn-glycero-3-phosphocholine + a fatty acid + H(+). In terms of biological role, PLA2 catalyzes the calcium-dependent hydrolysis of the 2-acyl groups in 3-sn-phosphoglycerides. The protein is Basic phospholipase A2 DE-1 of Hemachatus haemachatus (Rinkhals).